The sequence spans 177 residues: Small ribosomal subunit protein uS13 (177 aa).

The segment covering 132 to 145 (GVRHKRGQKVRGQR) has biased composition (basic residues). Positions 132–177 (GVRHKRGQKVRGQRTKSTGRTEGTIGVNVEAIKEEQAEDAAAEDDE) are disordered. The segment covering 167 to 177 (QAEDAAAEDDE) has biased composition (acidic residues).

It belongs to the universal ribosomal protein uS13 family. Part of the 30S ribosomal subunit. Forms a loose heterodimer with protein S19. Forms two bridges to the 50S subunit in the 70S ribosome.

Located at the top of the head of the 30S subunit, it contacts several helices of the 16S rRNA. In the 70S ribosome it contacts the 23S rRNA (bridge B1a) and protein L5 of the 50S subunit (bridge B1b), connecting the 2 subunits; these bridges are implicated in subunit movement. The chain is Small ribosomal subunit protein uS13 from Haloarcula marismortui (strain ATCC 43049 / DSM 3752 / JCM 8966 / VKM B-1809) (Halobacterium marismortui).